The chain runs to 290 residues: Thymidylate synthase (290 aa).

Arginine 31 is a dUMP binding site. Histidine 61 provides a ligand contact to (6R)-5,10-methylene-5,6,7,8-tetrahydrofolate. 152 to 153 (RR) lines the dUMP pocket. Cysteine 172 acts as the Nucleophile in catalysis. DUMP contacts are provided by residues 192–195 (RSAD), asparagine 203, and 233–235 (HIY). Aspartate 195 is a binding site for (6R)-5,10-methylene-5,6,7,8-tetrahydrofolate. Alanine 289 provides a ligand contact to (6R)-5,10-methylene-5,6,7,8-tetrahydrofolate.

Belongs to the thymidylate synthase family. Bacterial-type ThyA subfamily. In terms of assembly, homodimer.

The protein localises to the cytoplasm. The catalysed reaction is dUMP + (6R)-5,10-methylene-5,6,7,8-tetrahydrofolate = 7,8-dihydrofolate + dTMP. The protein operates within pyrimidine metabolism; dTTP biosynthesis. In terms of biological role, catalyzes the reductive methylation of 2'-deoxyuridine-5'-monophosphate (dUMP) to 2'-deoxythymidine-5'-monophosphate (dTMP) while utilizing 5,10-methylenetetrahydrofolate (mTHF) as the methyl donor and reductant in the reaction, yielding dihydrofolate (DHF) as a by-product. This enzymatic reaction provides an intracellular de novo source of dTMP, an essential precursor for DNA biosynthesis. The chain is Thymidylate synthase from Psychrobacter cryohalolentis (strain ATCC BAA-1226 / DSM 17306 / VKM B-2378 / K5).